A 203-amino-acid polypeptide reads, in one-letter code: Small ribosomal subunit protein uS4 (203 aa).

Residues 93-156 (RRLDNVVYRL…IKVPAILEAV (64 aa)) form the S4 RNA-binding domain.

It belongs to the universal ribosomal protein uS4 family. Part of the 30S ribosomal subunit. Contacts protein S5. The interaction surface between S4 and S5 is involved in control of translational fidelity.

One of the primary rRNA binding proteins, it binds directly to 16S rRNA where it nucleates assembly of the body of the 30S subunit. Functionally, with S5 and S12 plays an important role in translational accuracy. The sequence is that of Small ribosomal subunit protein uS4 from Streptococcus suis (strain 98HAH33).